The following is an 880-amino-acid chain: Translation initiation factor IF-2 (880 aa).

Positions glutamate 143 to isoleucine 228 are enriched in basic and acidic residues. The disordered stretch occupies residues glutamate 143–asparagine 289. Positions glycine 249–glycine 262 are enriched in basic residues. Positions serine 380–lysine 549 constitute a tr-type G domain. The segment at glycine 389–threonine 396 is G1. Glycine 389–threonine 396 is a GTP binding site. The interval glycine 414 to histidine 418 is G2. Residues aspartate 435 to glycine 438 form a G3 region. GTP is bound by residues aspartate 435 to histidine 439 and asparagine 489 to aspartate 492. Positions asparagine 489–aspartate 492 are G4. The tract at residues serine 525–lysine 527 is G5.

This sequence belongs to the TRAFAC class translation factor GTPase superfamily. Classic translation factor GTPase family. IF-2 subfamily.

It is found in the cytoplasm. One of the essential components for the initiation of protein synthesis. Protects formylmethionyl-tRNA from spontaneous hydrolysis and promotes its binding to the 30S ribosomal subunits. Also involved in the hydrolysis of GTP during the formation of the 70S ribosomal complex. The protein is Translation initiation factor IF-2 of Shewanella putrefaciens (strain CN-32 / ATCC BAA-453).